Here is a 363-residue protein sequence, read N- to C-terminus: Lovastatin nonaketide synthase, enoyl reductase component lovC (363 aa).

Residues 51-54 (SDTK), 174-177 (STAT), 197-200 (SPHN), Y215, 262-263 (LN), T280, and 351-352 (LS) each bind NADP(+). A lovB-binding region spans residues 226-272 (TYTKNNLRYALDCITNVESTTFCFAAIGRAGGHYVSLNPFPEHAATR).

It belongs to the zinc-containing alcohol dehydrogenase family. In terms of assembly, each MAT domain from the lovB homodimer binds one lovC molecule to form the final active lovB-lovC megasynthase complex.

It carries out the reaction holo-[lovastatin nonaketide synthase] + 9 malonyl-CoA + S-adenosyl-L-methionine + 11 NADPH + 19 H(+) = dihydromonacolin L-[lovastatin nonaketide synthase] + S-adenosyl-L-homocysteine + 9 CO2 + 11 NADP(+) + 9 CoA + 6 H2O. It functions in the pathway polyketide biosynthesis; lovastatin biosynthesis. In terms of biological role, trans-enoyl reductase; part of the gene cluster that mediates the biosynthesis of lovastatin (also known as mevinolin, mevacor or monacolin K), a hypolipidemic inhibitor of (3S)-hydroxymethylglutaryl-coenzyme A (HMG-CoA) reductase (HMGR). The first step in the biosynthesis of lovastatin is the production of dihydromonacolin L acid (DML) by the lovastatin nonaketide synthase lovB and the trans-acting enoyl reductase lovC (called the lovB-lovC megasynthase complex) via condensation of one acetyl-CoA unit and 8 malonyl-CoA units. The formation of the LovB/C complex is essential for the integrity of the catalytic chamber to the complete total synthesis of DML acid. Dihydromonacolin L acid is released from lovB by the thioesterase lovG. Next, dihydromonacolin L acid is oxidized by the dihydromonacolin L monooxygenase lovA twice to form monacolin J acid. The 2-methylbutyrate moiety of lovastatin is synthesized by the lovastatin diketide synthase lovF via condensation of one acetyl-CoA unit and one malonyl-CoA unit. Finally, the covalent attachment of this moiety to monacolin J acid is catalyzed by the transesterase lovD to yield lovastatin. LovD has broad substrate specificity and can also convert monacolin J to simvastatin using alpha-dimethylbutanoyl-S-methyl-3-mercaptopropionate (DMB-S-MMP) as the thioester acyl donor, and can also catalyze the reverse reaction and function as hydrolase in vitro. LovD has much higher activity with LovF-bound 2-methylbutanoate than with free diketide substrates. The polypeptide is Lovastatin nonaketide synthase, enoyl reductase component lovC (Aspergillus terreus).